The sequence spans 2115 residues: Non-reducing polyketide synthase ascC (2115 aa).

The tract at residues 1 to 21 is disordered; sequence MTLIQTKHSASAAVFSPQSTA. An N-terminal acylcarrier protein transacylase domain (SAT) region spans residues 14–260; it reads VFSPQSTAPK…HNSRNTELAQ (247 aa). The Ketosynthase family 3 (KS3) domain occupies 381–805; sequence PDSIAIVGSA…GSNSALICSE (425 aa). Catalysis depends on for beta-ketoacyl synthase activity residues Cys553, His689, and His728. Residues 908-1210 are malonyl-CoA:ACP transacylase (MAT) domain; it reads LTFSGQSRTT…ANPSAHTFQA (303 aa). Ser995 serves as the catalytic For acyl/malonyl transferase activity. The interval 1280–1406 is N-terminal hotdog fold; it reads PKKVQQLVTL…GDFFATSGEM (127 aa). The PKS/mFAS DH domain occupies 1280-1581; it reads PKKVQQLVTL…FMRIKAAKLE (302 aa). A product template (PT) domain region spans residues 1285 to 1580; that stretch reads QLVTLKKTEG…QFMRIKAAKL (296 aa). His1315 functions as the Proton acceptor; for dehydratase activity in the catalytic mechanism. Residues 1428 to 1581 are C-terminal hotdog fold; the sequence is DAERLRTATA…FMRIKAAKLE (154 aa). The Proton donor; for dehydratase activity role is filled by Asp1492. Residues 1587–1624 form a disordered region; sequence ANPGSKTKSTNGNALPSVPRSVPAGPTSAPQQVAPTTM. Positions 1588–1600 are enriched in polar residues; sequence NPGSKTKSTNGNA. Residues 1640 to 1724 form the Carrier domain; the sequence is PSKIADLKSL…PTAALTEGLV (85 aa). At Ser1674 the chain carries O-(pantetheine 4'-phosphoryl)serine. Over residues 1734–1748 the composition is skewed to polar residues; that stretch reads SDSIRNSTGFHTTIP. A disordered region spans residues 1734–1767; it reads SDSIRNSTGFHTTIPATPAELHSNPPDSLDGSTV. The tract at residues 1777–2107 is thioesterase (TE) domain; sequence ARFKLDTMVY…YDFLLGELEN (331 aa). Active-site for thioesterase activity residues include Ser1897 and Asp2045.

It carries out the reaction 3 malonyl-CoA + acetyl-CoA + 2 H(+) = orsellinate + 3 CO2 + 4 CoA. Its pathway is secondary metabolite biosynthesis; terpenoid biosynthesis. In terms of biological role, non-reducing polyketide synthase; part of the asc-1 gene cluster that mediates the biosynthesis of both ascochlorin and ascofuranone, a strong inhibitor of cyanide-insensitive alternative oxidases and a promising drug candidate against African trypanosomiasis. The first step in the pathway is performed by the non-reducing polyketide synthase ascC that produces orsellinic acid by condensing acetyl-CoA with 3 malonyl-CoA units. Orsellinic acid is then prenylated by the prenyltransferase ascA to yield ilicicolinic acid B. Ilicicolinic acid B is further reduced to ilicicolin B by the reductase ascB. The halogenase ascD then chlorinates ilicicolin B to produce ilicicolin A which is converted to ilicicolin A epoxide by the cytochrome P450 monooxygenase ascE that catalyzes stereoselective epoxidation of the terminal double bond of the prenyl group. Ilicicolin A epoxide is the last common precursor for the biosynthesis of ascofuranone and ascochlorin. The terpene cyclase ascF produces a monocyclic terpene, and the cyclization reaction is proposed to be initiated by protonation of the terminal epoxide of ilicicolin A epoxide to generate a monocyclic tertiarycation, which is followed by a series of hydride and methyl shifts with abstraction of proton, leading to the formation of the (14S,15R,19R)-trimethylcyclohexanone ring structure of ilicicolin C, which is finally reduced to ascochlorin by the dehydrogenase ascG. On the other hand, ilicicolin A epoxide is hydroxylated by the cytochrome P450 monooxygenase ascH, and the resultant product is cyclized by the terpene cyclase ascI to ascofuranol via protonation-initiated epoxide ring opening, which facilitates the 6-endo-tet cyclization to form the tetrahy-drofuran ring. Finally, ascofuranol is oxidized into ascofuranone by ascJ. In Acremonium egyptiacum (Oospora egyptiaca), this protein is Non-reducing polyketide synthase ascC.